Here is a 569-residue protein sequence, read N- to C-terminus: Glutamate--tRNA ligase (569 aa).

The short motif at 107-117 (PEPNGYPHIGH) is the 'HIGH' region element.

Belongs to the class-I aminoacyl-tRNA synthetase family. Glutamate--tRNA ligase type 2 subfamily.

It localises to the cytoplasm. It carries out the reaction tRNA(Glu) + L-glutamate + ATP = L-glutamyl-tRNA(Glu) + AMP + diphosphate. Its function is as follows. Catalyzes the attachment of glutamate to tRNA(Glu) in a two-step reaction: glutamate is first activated by ATP to form Glu-AMP and then transferred to the acceptor end of tRNA(Glu). This is Glutamate--tRNA ligase from Nitrosopumilus maritimus (strain SCM1).